A 247-amino-acid polypeptide reads, in one-letter code: Chloride intracellular channel protein 2 (247 aa).

An N-terminal region spans residues 1–94 (MSGLRPGTQV…KIEEFLEQTL (94 aa)). A required for insertion into the membrane region spans residues 1–96 (MSGLRPGTQV…EEFLEQTLAP (96 aa)). Position 25 (Glu25) interacts with glutathione. The short motif at 30-33 (CPFC) is the G-site element. Cys30 and Cys33 are disulfide-bonded. A helical membrane pass occupies residues 32 to 52 (FCQRLFMILWLKGVKFNVTTV). In terms of domain architecture, GST C-terminal spans 76-239 (NKELKTDFIK…PEDKEIENTY (164 aa)). Residues 95-106 (APPRYPHLSPKY) are joint loop. The C-terminal stretch occupies residues 107–247 (KESFDVGCNL…TYANVAKQKS (141 aa)). A foot loop region spans residues 151–171 (NTPLLDEIDPDSAEEPPVSRR). A glutathione-binding site is contributed by His227.

Belongs to the chloride channel CLIC family. Monomer. Interacts with TRAPPC2 and RYR2. As to expression, expressed in adult and fetal brain, heart, skeletal muscle, liver, lung, and spleen. Detected in adult stomach and testis. Expressed in fetal thymus and kidney.

It is found in the cytoplasm. Its subcellular location is the membrane. It carries out the reaction chloride(in) = chloride(out). The catalysed reaction is tert-butyl hydroperoxide + 2 glutathione = tert-butanol + glutathione disulfide + H2O. The enzyme catalyses cumene hydroperoxide + 2 glutathione = 2-phenylpropan-2-ol + glutathione disulfide + H2O. With respect to regulation, the channel conductance is regulated by pH. In terms of biological role, in the soluble state, catalyzes glutaredoxin-like thiol disulfide exchange reactions with reduced glutathione as electron donor. Displays weak glutathione peroxidase activity. Can insert into membranes and form chloride ion channels. Membrane insertion seems to be redox-regulated and may occur only under oxidizing conditions. Modulates the activity of RYR2 and inhibits calcium influx. The polypeptide is Chloride intracellular channel protein 2 (Homo sapiens (Human)).